The primary structure comprises 1263 residues: Histone-lysine N-methyltransferase EHMT2 (1263 aa).

Disordered regions lie at residues 1–314 (MRGL…LEEW) and 332–439 (DERV…EYME). Residues 26–39 (GRGRGGAHRGRGRP) are compositionally biased toward basic residues. Arginine 40 bears the Asymmetric dimethylarginine mark. The segment covering 83–95 (LEKEPRGAAERVH) has biased composition (basic and acidic residues). Serine 97 bears the Phosphoserine mark. Threonine 101 carries the phosphothreonine modification. Residues serine 104 and serine 193 each carry the phosphoserine modification. Position 239 is an N6,N6,N6-trimethyllysine; by EHMT2; alternate (lysine 239). An N6,N6-dimethyllysine; by EHMT2; alternate modification is found at lysine 239. Residues 252–270 (PEKRPPEVQHFRMSDDMHL) are compositionally biased toward basic and acidic residues. Residues lysine 272 and lysine 282 each participate in a glycyl lysine isopeptide (Lys-Gly) (interchain with G-Cter in SUMO2) cross-link. A phosphoserine mark is found at serine 285, serine 294, and serine 298. 2 stretches are compositionally biased toward basic and acidic residues: residues 302 to 312 (ILEKGEPRPLE) and 332 to 343 (DERVDSDSKSEV). Over residues 350-380 (LSEEEEEEEEEEEEEEEEEEEEEEEEEDEES) the composition is skewed to acidic residues. Positions 391–400 (GRRKAKKKWR) are enriched in basic residues. Phosphoserine occurs at positions 403, 465, and 466. A Phosphothreonine modification is found at threonine 608. A disordered region spans residues 621–647 (LAHDAPGRADTSQPSARMRGHGEPRRP). Lysine 687 is covalently cross-linked (Glycyl lysine isopeptide (Lys-Gly) (interchain with G-Cter in SUMO2)). ANK repeat units follow at residues 702-731 (FHPRQLYLSVKQGELQKVILMLLDNLDPNF), 737-766 (SKRTPLHAAAQKGSVEICHVLLQAGANINA), 770-799 (QQRTPLMEAVVNNHLEVARYMVQLGGCVYS), 803-833 (DGSTCLHHAAKIGNLEMVSLLLSTGQVDVNA), 837-866 (GGWTPIIWAAEHKHIDVIRMLLTRGADVTL), 870-899 (EENICLHWASFTGSAAIAEVLLNAQCDLHA), and 903-932 (HGDTPLHIAARESYHDCVLLFLSRGANPEL). Positions 870–872 (EEN) are histone H3K9me binding. The Pre-SET domain maps to 1025-1088 (QHCTCVDDCS…SCKNRVVQSG (64 aa)). Residues cysteine 1027, cysteine 1029, cysteine 1033, cysteine 1038, cysteine 1040, cysteine 1070, cysteine 1074, cysteine 1076, and cysteine 1080 each coordinate Zn(2+). The region spanning 1091–1208 (VRLQLYRTAK…TGEELGFDYG (118 aa)) is the SET domain. S-adenosyl-L-methionine is bound by residues 1101 to 1103 (MGW), tyrosine 1138, and 1165 to 1166 (NH). The tract at residues 1127-1146 (DAEADVREDDSYLFDLDNKD) is interaction with histone H3. Cysteine 1168 is a Zn(2+) binding site. Residues 1207-1210 (YGDR) form an interaction with histone H3 region. Residues 1217–1233 (KYFTCQCGSEKCKHSAE) enclose the Post-SET domain. Zn(2+) is bound by residues cysteine 1221, cysteine 1223, and cysteine 1228. The residue at position 1257 (serine 1257) is a Phosphoserine. Position 1263 is a phosphothreonine (threonine 1263).

This sequence belongs to the class V-like SAM-binding methyltransferase superfamily. Histone-lysine methyltransferase family. Suvar3-9 subfamily. In terms of assembly, heterodimer; heterodimerizes with EHMT1/GLP. Interacts with GFI1B and WIZ. Part of the E2F6.com-1 complex in G0 phase composed of E2F6, MGA, MAX, TFDP1, CBX3, BAT8, EHMT1, RING1, RNF2, MBLR, L3MBTL2 and YAF2. Part of a complex composed of TRIM28, HDAC1, HDAC2 and EHMT2. Interacts with UHRF1. Interacts with CDYL. Interacts with REST only in the presence of CDYL. Part of a complex containing at least CDYL, REST, WIZ, SETB1, EHMT1 and EHMT2. Interacts with PRDM9 and CDYL; interaction only takes place when PRDM9 is bound to hotspot DNA. Interacts with SMYD5. Post-translationally, methylated at Lys-239; automethylated. In terms of tissue distribution, ubiquitous.

It is found in the nucleus. Its subcellular location is the chromosome. The catalysed reaction is N(6)-methyl-L-lysyl(9)-[histone H3] + S-adenosyl-L-methionine = N(6),N(6)-dimethyl-L-lysyl(9)-[histone H3] + S-adenosyl-L-homocysteine + H(+). The enzyme catalyses L-lysyl(9)-[histone H3] + S-adenosyl-L-methionine = N(6)-methyl-L-lysyl(9)-[histone H3] + S-adenosyl-L-homocysteine + H(+). Histone methyltransferase that specifically mono- and dimethylates 'Lys-9' of histone H3 (H3K9me1 and H3K9me2, respectively) in euchromatin. H3K9me represents a specific tag for epigenetic transcriptional repression by recruiting HP1 proteins to methylated histones. Also mediates monomethylation of 'Lys-56' of histone H3 (H3K56me1) in G1 phase, leading to promote interaction between histone H3 and PCNA and regulating DNA replication. Also weakly methylates 'Lys-27' of histone H3 (H3K27me). Also required for DNA methylation, the histone methyltransferase activity is not required for DNA methylation, suggesting that these 2 activities function independently. Probably targeted to histone H3 by different DNA-binding proteins like E2F6, MGA, MAX and/or DP1. May also methylate histone H1. In addition to the histone methyltransferase activity, also methylates non-histone proteins: mediates dimethylation of 'Lys-373' of p53/TP53. Also methylates CDYL, WIZ, ACIN1, DNMT1, HDAC1, ERCC6, KLF12 and itself. The protein is Histone-lysine N-methyltransferase EHMT2 (Ehmt2) of Mus musculus (Mouse).